A 247-amino-acid chain; its full sequence is MQSIFLPVLNPTTIDGQEITEEWIKKYGPTLRGKPVNIDHNYYSNGNLAVGDVVDVYFNPEGNLYAHIRIFDEIYWRLVDNGIKIKGVSFEFNDDGVGEEGIMKGLALCLESDPKVDFARLVEGNYVLEVLASIKRDSMDTKTQEKTEPKKIKDMTEEEFEKFLHEKIEQILASHKKENEDKDKSDNEDDKVVEILASKMDELVAVNKSVLKQLEEIRKAQKEILASAPVPPSGSGNSGHRRANLGL.

Residues 225 to 247 are disordered; sequence LASAPVPPSGSGNSGHRRANLGL.

This is an uncharacterized protein from Methanocaldococcus jannaschii (strain ATCC 43067 / DSM 2661 / JAL-1 / JCM 10045 / NBRC 100440) (Methanococcus jannaschii).